A 682-amino-acid chain; its full sequence is Protein asunder (682 aa).

Residues 517-570 (NGARLKLSKAKDQYRLLYRELEQLIHLNATTVHHKNLLESLQSLRAAYGEAKSE) adopt a coiled-coil conformation. The span at 571–583 (PNSSLLRSYTESP) shows a compositional bias: polar residues. Residues 571-612 (PNSSLLRSYTESPHSPERLEPIPSGGSSGSNSNSLLKASKRR) form a disordered region. The Nuclear localization signal (NLS) motif lies at 606–612 (LKASKRR).

This sequence belongs to the Integrator subunit 13 family. In terms of assembly, belongs to the multiprotein complex Integrator, at least composed of IntS1, IntS2, IntS3, IntS4, omd/IntS5, IntS6, defl/IntS7, IntS8, IntS9, IntS10, IntS11, IntS12, asun/IntS13, IntS14 and IntS15. The core complex associates with protein phosphatase 2A subunits mts/PP2A and Pp2A-29B, to form the Integrator-PP2A (INTAC) complex. In terms of processing, phosphorylated.

Its subcellular location is the nucleus. The protein resides in the cytoplasm. It localises to the perinuclear region. In terms of biological role, component of the integrator complex, a multiprotein complex that terminates RNA polymerase II (Pol II) transcription in the promoter-proximal region of genes. The integrator complex provides a quality checkpoint during transcription elongation by driving premature transcription termination of transcripts that are unfavorably configured for transcriptional elongation: the complex terminates transcription by (1) catalyzing dephosphorylation of the C-terminal domain (CTD) of Pol II subunit Polr2A/Rbp1 and Spt5, and (2) degrading the exiting nascent RNA transcript via endonuclease activity. The integrator complex is also involved in the 3'-end processing of the U7 snRNA, and also the spliceosomal snRNAs U1, U2, U4 and U5. The sequence is that of Protein asunder (asun) from Drosophila ananassae (Fruit fly).